Reading from the N-terminus, the 562-residue chain is Sulfite reductase [NADPH] hemoprotein beta-component (562 aa).

Positions 426, 432, 471, and 475 each coordinate [4Fe-4S] cluster. Residue Cys-475 participates in siroheme binding.

The protein belongs to the nitrite and sulfite reductase 4Fe-4S domain family. In terms of assembly, alpha(8)-beta(8). The alpha component is a flavoprotein, the beta component is a hemoprotein. Siroheme is required as a cofactor. Requires [4Fe-4S] cluster as cofactor.

The catalysed reaction is hydrogen sulfide + 3 NADP(+) + 3 H2O = sulfite + 3 NADPH + 4 H(+). It functions in the pathway sulfur metabolism; hydrogen sulfide biosynthesis; hydrogen sulfide from sulfite (NADPH route): step 1/1. In terms of biological role, component of the sulfite reductase complex that catalyzes the 6-electron reduction of sulfite to sulfide. This is one of several activities required for the biosynthesis of L-cysteine from sulfate. The sequence is that of Sulfite reductase [NADPH] hemoprotein beta-component from Shewanella denitrificans (strain OS217 / ATCC BAA-1090 / DSM 15013).